A 543-amino-acid polypeptide reads, in one-letter code: Hydroxylamine reductase (543 aa).

[4Fe-4S] cluster contacts are provided by C3, C6, C15, and C21. Residues H244, E268, C312, C399, C427, C452, E486, and K488 each contribute to the hybrid [4Fe-2O-2S] cluster site. C399 is modified (cysteine persulfide).

This sequence belongs to the HCP family. It depends on [4Fe-4S] cluster as a cofactor. Requires hybrid [4Fe-2O-2S] cluster as cofactor.

The protein resides in the cytoplasm. The catalysed reaction is A + NH4(+) + H2O = hydroxylamine + AH2 + H(+). Catalyzes the reduction of hydroxylamine to form NH(3) and H(2)O. This Methanocella arvoryzae (strain DSM 22066 / NBRC 105507 / MRE50) protein is Hydroxylamine reductase.